A 274-amino-acid polypeptide reads, in one-letter code: Exosome complex component Rrp42 (274 aa).

The protein belongs to the RNase PH family. Rrp42 subfamily. Component of the archaeal exosome complex. Forms a hexameric ring-like arrangement composed of 3 Rrp41-Rrp42 heterodimers. The hexameric ring associates with a trimer of Rrp4 and/or Csl4 subunits.

It is found in the cytoplasm. Functionally, non-catalytic component of the exosome, which is a complex involved in RNA degradation. Contributes to the structuring of the Rrp41 active site. The protein is Exosome complex component Rrp42 of Pyrococcus horikoshii (strain ATCC 700860 / DSM 12428 / JCM 9974 / NBRC 100139 / OT-3).